Reading from the N-terminus, the 270-residue chain is MADHMMAMNHGRFPDGTNGLHHHPAHRMGMGQFPSPHHHQQQQPQHAFNALMGEHIHYGAGNMNATSGIRHAMGPGTVNGGHPPSALAPAARFNNSQFMGPPVASQGGSLPASMQLQKLNNQYFNHHPYPHNHYMPDLHPAAGHQMNGTNQHFRDCNPKHSGGSSTPGGSGGSSTPGGSGSSSGGGAGSSNSGGGSGSGNMPASVAHVPAAMLPPNVIDTDFIDEEVLMSLVIEMGLDRIKELPELWLGQNEFDFMTDFVCKQQPSRVSC.

The tract at residues 138-201 (LHPAAGHQMN…SGGGSGSGNM (64 aa)) is disordered. Residues 165-198 (STPGGSGGSSTPGGSGSSSGGGAGSSNSGGGSGS) show a composition bias toward gly residues.

This sequence belongs to the CITED family. Interacts (via C-terminus) with SMAD2. Interacts (via C-terminus) with SMAD3 (via MH2 domain). Interacts with LHX2 (via LIM domains). Interacts with WT1. Interacts (via C-terminus) with EP300 (via CH1 domain); the interaction is stimulated in response to hypoxia. Interacts with PPARA. Interacts (via C-terminus) with TFAP2A, TFAP2B and TFAP2C.

Its subcellular location is the nucleus. In terms of biological role, transcriptional coactivator of the p300/CBP-mediated transcription complex. Acts as a bridge, linking TFAP2 transcription factors and the p300/CBP transcriptional coactivator complex in order to stimulate TFAP2-mediated transcriptional activation. Positively regulates TGF-beta signaling through its association with the SMAD/p300/CBP-mediated transcriptional coactivator complex. Stimulates the peroxisome proliferator-activated receptors PPARA transcriptional activity. Enhances estrogen-dependent transactivation mediated by estrogen receptors. Also acts as a transcriptional corepressor; interferes with the binding of the transcription factors HIF1A or STAT2 and the p300/CBP transcriptional coactivator complex. Participates in sex determination and early gonad development by stimulating transcription activation of SRY. Plays a role in controlling left-right patterning during embryogenesis; potentiates transcriptional activation of NODAL-mediated gene transcription in the left lateral plate mesoderm (LPM). Plays an essential role in differentiation of the adrenal cortex from the adrenogonadal primordium (AGP); stimulates WT1-mediated transcription activation thereby up-regulating the nuclear hormone receptor NR5A1 promoter activity. Associates with chromatin to the PITX2 P1 promoter region. This Homo sapiens (Human) protein is Cbp/p300-interacting transactivator 2 (CITED2).